Here is a 296-residue protein sequence, read N- to C-terminus: Probable endonuclease 4 (296 aa).

Residues histidine 68, histidine 109, glutamate 144, aspartate 178, histidine 181, histidine 213, aspartate 226, histidine 228, and glutamate 258 each coordinate Zn(2+).

Belongs to the AP endonuclease 2 family. The cofactor is Zn(2+).

It carries out the reaction Endonucleolytic cleavage to 5'-phosphooligonucleotide end-products.. Its function is as follows. Endonuclease IV plays a role in DNA repair. It cleaves phosphodiester bonds at apurinic or apyrimidinic (AP) sites, generating a 3'-hydroxyl group and a 5'-terminal sugar phosphate. The polypeptide is Probable endonuclease 4 (Staphylococcus aureus (strain Mu3 / ATCC 700698)).